A 105-amino-acid polypeptide reads, in one-letter code: MKKIRKGDSVIVIAGKDKGKQSTVIRFQSTERVIVREVNKVKSHIKPNPNRNIAGGIVETEKPLHISNIAIFNPEKNKADRVGFRFNESGNKVRYFKSDGTLIDS.

This sequence belongs to the universal ribosomal protein uL24 family. In terms of assembly, part of the 50S ribosomal subunit.

One of two assembly initiator proteins, it binds directly to the 5'-end of the 23S rRNA, where it nucleates assembly of the 50S subunit. Its function is as follows. One of the proteins that surrounds the polypeptide exit tunnel on the outside of the subunit. The chain is Large ribosomal subunit protein uL24 from Nitrosomonas europaea (strain ATCC 19718 / CIP 103999 / KCTC 2705 / NBRC 14298).